A 91-amino-acid polypeptide reads, in one-letter code: DNA-binding protein HRL53 (91 aa).

A disordered region spans residues 57–91; the sequence is ATKGRNPSTGAEVDIPARNVPKFTPGKGLKDAVNG.

This sequence belongs to the bacterial histone-like protein family.

Its function is as follows. Histone-like DNA-binding protein which is capable of wrapping DNA to stabilize it, and thus to prevent its denaturation under extreme environmental conditions. Binds to nod promoters and induces DNA binding. This chain is DNA-binding protein HRL53, found in Rhizobium leguminosarum.